The sequence spans 428 residues: Histidinol dehydrogenase (428 aa).

Residues tyrosine 125, glutamine 187, and asparagine 210 each contribute to the NAD(+) site. Residues serine 234, glutamine 256, and histidine 259 each contribute to the substrate site. Zn(2+) contacts are provided by glutamine 256 and histidine 259. Catalysis depends on proton acceptor residues glutamate 323 and histidine 324. Histidine 324, aspartate 357, glutamate 411, and histidine 416 together coordinate substrate. Aspartate 357 serves as a coordination point for Zn(2+). Position 416 (histidine 416) interacts with Zn(2+).

It belongs to the histidinol dehydrogenase family. Zn(2+) is required as a cofactor.

It catalyses the reaction L-histidinol + 2 NAD(+) + H2O = L-histidine + 2 NADH + 3 H(+). The protein operates within amino-acid biosynthesis; L-histidine biosynthesis; L-histidine from 5-phospho-alpha-D-ribose 1-diphosphate: step 9/9. Catalyzes the sequential NAD-dependent oxidations of L-histidinol to L-histidinaldehyde and then to L-histidine. The sequence is that of Histidinol dehydrogenase from Bacteroides thetaiotaomicron (strain ATCC 29148 / DSM 2079 / JCM 5827 / CCUG 10774 / NCTC 10582 / VPI-5482 / E50).